Reading from the N-terminus, the 485-residue chain is Pre-glycoprotein polyprotein GP complex (485 aa).

Gly-2 carries N-myristoyl glycine; by host lipidation. Over 2–17 the chain is Extracellular; it reads GQFISFMQEIPTFLQE. A helical transmembrane segment spans residues 18–33; that stretch reads ALNIALVAVSLIAIIK. At 34–58 the chain is on the cytoplasmic side; it reads GVVNLYKSGLFQFFVFLALAGRSCT. Cys-57 provides a ligand contact to Zn(2+). At 59-424 the chain is on the extracellular side; the sequence is EEAFKIGLHT…QGKTPLTLVD (366 aa). 6 cysteine pairs are disulfide-bonded: Cys-92–Cys-226, Cys-135–Cys-164, Cys-207–Cys-213, Cys-271–Cys-284, Cys-293–Cys-302, and Cys-356–Cys-377. Asn-95 and Asn-105 each carry an N-linked (GlcNAc...) asparagine; by host glycan. N-linked (GlcNAc...) asparagine; by host glycosylation is found at Asn-166 and Asn-178. The fusion stretch occupies residues 250-286; the sequence is LKAFFSWSLTDSSGKDTPGGYCLEEWMLVAAKMKCFG. Residues 287–355 form an HR1 region; sequence NTAVAKCNLN…KIRELMSVPY (69 aa). N-linked (GlcNAc...) asparagine; by host glycosylation is found at Asn-357, Asn-365, Asn-382, and Asn-387. The tract at residues 360 to 423 is HR2; it reads KFWYVNHTLS…RQGKTPLTLV (64 aa). A helical transmembrane segment spans residues 425 to 445; it reads ICFWSTVFFTASLFLHLVGIP. At 446-485 the chain is on the cytoplasmic side; the sequence is THRHIRGEACPLPHRLNSLGGCRCGKYPNLKKPTVWRRGH. Residues His-447, His-449, Cys-455, His-459, Cys-467, Cys-469, and His-485 each contribute to the Zn(2+) site.

Belongs to the arenaviridae GPC protein family. In terms of assembly, interacts with glycoprotein G2. Part of the GP complex (GP-C) together with glycoprotein G1 and glycoprotein G2. The GP-complex interacts with protein Z, which interacts with ribonucleocapsid; these interactions may induce virion budding. Homotrimer; disulfide-linked. In pre-fusion state, G1 homotrimers bind G2 homotrimers via ionic interactions. Part of the GP complex (GP-C) together with glycoprotein G2 and the stable signal peptide. Interacts with host TFRC. The GP-complex interacts with protein Z, which interacts with ribonucleocapsid; these interactions may induce virion budding. As to quaternary structure, homotrimer. Interacts with the stable signal peptide. In pre-fusion state, G2 homotrimers bind G1 homotrimers via ionic interactions. Part of the GP complex (GP-C) together with glycoprotein G1 and the stable signal peptide. Acidification in the endosome triggers rearrangements, which ultimately leads to a 6 helix bundle formed by the two heptad repeat domains (HR1 and HR2) in post-fusion state. The GP-complex interacts with protein Z, which interacts with ribonucleocapsid; these interactions may induce virion budding. Specific enzymatic cleavages in vivo yield mature proteins. GP-C polyprotein is cleaved in the endoplasmic reticulum by the host protease MBTPS1. Only cleaved glycoprotein is incorporated into virions. Post-translationally, the SSP remains stably associated with the GP complex following cleavage by signal peptidase and plays crucial roles in the trafficking of GP through the secretory pathway. In terms of processing, myristoylation is necessary for GP2-mediated fusion activity.

The protein resides in the virion membrane. It localises to the host endoplasmic reticulum membrane. Its subcellular location is the host Golgi apparatus membrane. It is found in the host cell membrane. In terms of biological role, functions as a cleaved signal peptide that is retained as the third component of the GP complex (GP-C). Helps to stabilize the spike complex in its native conformation. The SSP is required for efficient glycoprotein expression, post-translational maturation cleavage of G1 and G2, glycoprotein transport to the cell surface plasma membrane, formation of infectious virus particles, and acid pH-dependent glycoprotein-mediated cell fusion. Forms the virion spikes together with glycoprotein G2. The glycoprotein spike trimers are connected to the underlying matrix. Mediates virus attachment to host TFRC. This attachment induces virion internalization predominantly through clathrin-mediated endocytosis. Functionally, forms the virion spikes together with glycoprotein G1. The glycoprotein spike trimers are connected to the underlying matrix. Class I viral fusion protein that directs fusion of viral and host endosomal membranes, leading to delivery of the nucleocapsid into the cytoplasm. Membrane fusion is mediated by irreversible conformational changes induced by acidification. This chain is Pre-glycoprotein polyprotein GP complex, found in Junin mammarenavirus (JUNV).